The primary structure comprises 390 residues: MNIHEYQGKDILRKFGVSVPKGIVAFTAEEARQAAEQLFEEQENPVVVVKAQIHAGGRGKAGGVKLAKSPDEVFDIARQMIGCTLVTHQTGPEGKEVRRLLVEEGMNIEKEFYVGITLDRATSQNVLMVSTEGGMEIETVAEETPEKLLKIQIHPLQGLQGFQARQAAFFLGLEGDKFKNTVKFITALYKAYTAIDASIAEINPLVITKEGKVMALDAKINFDSNALFRHKDFLELRDISEEDPFEVEASKSNLNYVRLDGNVGCMVNGAGLAMATMDMIQLAGGKPANFLDVGGSASPETVEEGFKIIMSDKNVKAILINIFGGIVRCDRVAGGVIEAAKKVGLDMPVIVRLEGTNAEIAQKMLDESGLNLIAANGLREAAQKVNEALS.

Residues 9 to 248 form the ATP-grasp domain; sequence KDILRKFGVS…ISEEDPFEVE (240 aa). ATP contacts are provided by residues K50, 57–59, E103, M106, and E111; that span reads GRG. Residues N203 and D217 each coordinate Mg(2+). Substrate contacts are provided by residues N268 and 325-327; that span reads GIV.

The protein belongs to the succinate/malate CoA ligase beta subunit family. Heterotetramer of two alpha and two beta subunits. The cofactor is Mg(2+).

The catalysed reaction is succinate + ATP + CoA = succinyl-CoA + ADP + phosphate. The enzyme catalyses GTP + succinate + CoA = succinyl-CoA + GDP + phosphate. The protein operates within carbohydrate metabolism; tricarboxylic acid cycle; succinate from succinyl-CoA (ligase route): step 1/1. In terms of biological role, succinyl-CoA synthetase functions in the citric acid cycle (TCA), coupling the hydrolysis of succinyl-CoA to the synthesis of either ATP or GTP and thus represents the only step of substrate-level phosphorylation in the TCA. The beta subunit provides nucleotide specificity of the enzyme and binds the substrate succinate, while the binding sites for coenzyme A and phosphate are found in the alpha subunit. This Prosthecochloris aestuarii (strain DSM 271 / SK 413) protein is Succinate--CoA ligase [ADP-forming] subunit beta.